An 864-amino-acid chain; its full sequence is Protein 4.1 (864 aa).

Polar residues-rich tracts occupy residues 1-16 (MTTE…NSQH) and 27-41 (NSGQ…SCQT). Disordered stretches follow at residues 1–122 (MTTE…GTSL), 136–170 (EPEL…DFEI), and 182–202 (IEVK…ASQK). Ser14 carries the post-translational modification Phosphoserine. Thr60 is subject to Phosphothreonine; by CDK1. A compositionally biased stretch (basic and acidic residues) spans 61–75 (PTHEDLTKNKERTSE). Positions 76–87 (SRGLSRLFSSFL) are enriched in low complexity. A phosphoserine mark is found at Ser84, Ser85, Ser95, Ser104, Ser121, Ser149, Ser151, Ser152, Ser188, and Ser191. Residues 101 to 117 (EVESDKEKGEGGQKEIE) are compositionally biased toward basic and acidic residues. The segment covering 149–158 (SLSSAETQPA) has biased composition (polar residues). Positions 182–199 (IEVKEESPQSKAETELKA) are enriched in basic and acidic residues. Residues 210–491 (MHCKVSLLDD…EHHTFFRLTS (282 aa)) form the FERM domain. Tyr222 bears the Phosphotyrosine mark. Thr378 is subject to Phosphothreonine. A hydrophilic region spans residues 494–614 (TIPKSKFLAL…QAEPEPTEAW (121 aa)). Disordered regions lie at residues 518–572 (RQAS…VAEG) and 586–611 (KAQK…PEPT). 4 positions are modified to phosphoserine: Ser521, Ser540, Ser542, and Ser555. A compositionally biased stretch (basic and acidic residues) spans 587 to 600 (AQKETVKAEVKKED). Over residues 601–610 (EPPEQAEPEP) the composition is skewed to acidic residues. Residues 615-713 (KVEKTHIEVT…WDKRLSTHSP (99 aa)) form a spectrin--actin-binding region. A Phosphotyrosine; by EGFR modification is found at Tyr660. 4 positions are modified to phosphoserine: Ser664, Ser674, Ser684, and Ser709. Phosphoserine; by CDK1 is present on Ser712. The tract at residues 714 to 864 (FRTLNINGQI…VHQETEIADE (151 aa)) is C-terminal (CTD). Residues Thr736 and Thr859 each carry the phosphothreonine modification.

Binds with a high affinity to glycophorin and with lower affinity to band III protein. Associates with the nuclear mitotic apparatus. Interacts with calmodulin. Interacts with CPAP. Interacts with DLG1. Also found to associate with contractile apparatus and tight junctions. Interacts with NUMA1; this interaction is negatively regulated by CDK1 during metaphase and promotes anaphase-specific localization of NUMA1 in symmetrically dividing cells. Interacts with ATP2B1; regulates small intestinal calcium absorption through regulation of membrane expression of ATP2B1. Phosphorylated at multiple sites by different protein kinases and each phosphorylation event selectively modulates the protein's functions. In terms of processing, phosphorylation on Tyr-660 reduces the ability of 4.1 to promote the assembly of the spectrin/actin/4.1 ternary complex. Post-translationally, O-glycosylated; contains N-acetylglucosamine side chains in the C-terminal domain.

Its subcellular location is the cytoplasm. The protein resides in the cytoskeleton. It localises to the cell cortex. It is found in the nucleus. Functionally, protein 4.1 is a major structural element of the erythrocyte membrane skeleton. It plays a key role in regulating membrane physical properties of mechanical stability and deformability by stabilizing spectrin-actin interaction. Recruits DLG1 to membranes. Required for dynein-dynactin complex and NUMA1 recruitment at the mitotic cell cortex during anaphase. In Homo sapiens (Human), this protein is Protein 4.1.